Reading from the N-terminus, the 31-residue chain is Ranatuerin-2 (31 aa).

Cysteine 23 and cysteine 28 are joined by a disulfide.

The protein belongs to the frog skin active peptide (FSAP) family. Ranatuerin subfamily. Expressed by the skin glands.

The protein localises to the secreted. Its function is as follows. Antibacterial activity against Gram-positive bacterium S.aureus (MIC=60 uM). Shows no detectable hemolytic activity towards human erythrocytes. This is Ranatuerin-2 from Aquarana catesbeiana (American bullfrog).